The chain runs to 366 residues: Histidinol-phosphate aminotransferase 2 (366 aa).

Positions 1–21 (MQVKDQLSLLQPYKPGKSPEQ) are disordered. An N6-(pyridoxal phosphate)lysine modification is found at K222.

The protein belongs to the class-II pyridoxal-phosphate-dependent aminotransferase family. Histidinol-phosphate aminotransferase subfamily. In terms of assembly, homodimer. It depends on pyridoxal 5'-phosphate as a cofactor.

The enzyme catalyses L-histidinol phosphate + 2-oxoglutarate = 3-(imidazol-4-yl)-2-oxopropyl phosphate + L-glutamate. It functions in the pathway amino-acid biosynthesis; L-histidine biosynthesis; L-histidine from 5-phospho-alpha-D-ribose 1-diphosphate: step 7/9. This Bacillus cereus (strain ZK / E33L) protein is Histidinol-phosphate aminotransferase 2.